Here is a 391-residue protein sequence, read N- to C-terminus: Succinate--CoA ligase [ADP-forming] subunit beta (391 aa).

One can recognise an ATP-grasp domain in the interval 9–237 (RDLFEKHGVP…RATTDPLELR (229 aa)). ATP-binding positions include K46, 53 to 55 (GRG), A95, and E100. The Mg(2+) site is built by N192 and D206. Substrate is bound by residues N257 and 320-322 (GIT).

It belongs to the succinate/malate CoA ligase beta subunit family. In terms of assembly, heterotetramer of two alpha and two beta subunits. Requires Mg(2+) as cofactor.

It catalyses the reaction succinate + ATP + CoA = succinyl-CoA + ADP + phosphate. It carries out the reaction GTP + succinate + CoA = succinyl-CoA + GDP + phosphate. It participates in carbohydrate metabolism; tricarboxylic acid cycle; succinate from succinyl-CoA (ligase route): step 1/1. Functionally, succinyl-CoA synthetase functions in the citric acid cycle (TCA), coupling the hydrolysis of succinyl-CoA to the synthesis of either ATP or GTP and thus represents the only step of substrate-level phosphorylation in the TCA. The beta subunit provides nucleotide specificity of the enzyme and binds the substrate succinate, while the binding sites for coenzyme A and phosphate are found in the alpha subunit. The sequence is that of Succinate--CoA ligase [ADP-forming] subunit beta from Cutibacterium acnes (strain DSM 16379 / KPA171202) (Propionibacterium acnes).